A 484-amino-acid chain; its full sequence is Glutelin type-D 1 (484 aa).

Residues 1–27 (MATTTSLLSSCLCALLLAPLFSQGVDA) form the signal peptide. Cystine bridges form between Cys38–Cys71 and Cys114–Cys292. 2 Cupin type-1 domains span residues 43-238 (LQAF…EASK) and 298-447 (VNIE…DEAR).

This sequence belongs to the 11S seed storage protein (globulins) family. In terms of assembly, hexamer; each subunit is composed of an acidic and a basic chain derived from a single precursor and linked by a disulfide bond.

The protein resides in the protein storage vacuole. Functionally, seed storage protein. The sequence is that of Glutelin type-D 1 from Oryza sativa subsp. japonica (Rice).